Consider the following 300-residue polypeptide: GTPase Era (300 aa).

The region spanning 8 to 176 (RCGYVAIVGR…EALIAKHLPE (169 aa)) is the Era-type G domain. The G1 stretch occupies residues 16–23 (GRPNVGKS). Position 16-23 (16-23 (GRPNVGKS)) interacts with GTP. The segment at 42–46 (QTTRH) is G2. The interval 63-66 (DTPG) is G3. GTP is bound by residues 63–67 (DTPGM) and 125–128 (NKTD). The tract at residues 125–128 (NKTD) is G4. Positions 155 to 157 (ISA) are G5. In terms of domain architecture, KH type-2 spans 199-283 (VREKIMRQLG…MLNLWVKVKG (85 aa)).

Belongs to the TRAFAC class TrmE-Era-EngA-EngB-Septin-like GTPase superfamily. Era GTPase family. As to quaternary structure, monomer.

It is found in the cytoplasm. The protein localises to the cell inner membrane. Functionally, an essential GTPase that binds both GDP and GTP, with rapid nucleotide exchange. Plays a role in 16S rRNA processing and 30S ribosomal subunit biogenesis and possibly also in cell cycle regulation and energy metabolism. The chain is GTPase Era from Pseudomonas putida (strain W619).